A 176-amino-acid chain; its full sequence is tRNA (adenine(37)-N6)-methyltransferase (176 aa).

The TsaA-like domain maps to 1-94 (SFSHIWVQFV…YLPFVEAQPD (94 aa)). Residues histidine 12, 12–13 (HG), arginine 40, leucine 50, and 74–77 (LDGT) contribute to the S-adenosyl-L-methionine site.

The protein belongs to the tRNA methyltransferase O family.

The catalysed reaction is N(6)-L-threonylcarbamoyladenosine(37) in tRNA + S-adenosyl-L-methionine = N(6)-methyl,N(6)-L-threonylcarbamoyladenosine(37) in tRNA + S-adenosyl-L-homocysteine + H(+). Functionally, S-adenosyl-L-methionine-dependent methyltransferase responsible for the addition of the methyl group in the formation of N6-methyl-N6-threonylcarbamoyladenosine at position 37 (m(6)t(6)A37) of the tRNA anticodon loop of tRNA(Thr)(GGU). The methyl group of m(6)t(6)A37 appears to slightly improve the efficiency of the tRNA decoding ability. Binds to tRNA. This is tRNA (adenine(37)-N6)-methyltransferase from Eikenella corrodens.